The following is a 365-amino-acid chain: DNA replication and repair protein RecF (365 aa).

30–37 (GRNAQGKT) contributes to the ATP binding site.

This sequence belongs to the RecF family.

It localises to the cytoplasm. Its function is as follows. The RecF protein is involved in DNA metabolism; it is required for DNA replication and normal SOS inducibility. RecF binds preferentially to single-stranded, linear DNA. It also seems to bind ATP. The polypeptide is DNA replication and repair protein RecF (Streptococcus pneumoniae serotype 4 (strain ATCC BAA-334 / TIGR4)).